The following is a 301-amino-acid chain: Probable deoxyhypusine synthase 1 (301 aa).

Lys269 serves as the catalytic Nucleophile.

The protein belongs to the deoxyhypusine synthase family. The cofactor is NAD(+).

It catalyses the reaction [eIF5A protein]-L-lysine + spermidine = [eIF5A protein]-deoxyhypusine + propane-1,3-diamine. It participates in protein modification; eIF5A hypusination. In terms of biological role, catalyzes the NAD-dependent oxidative cleavage of spermidine and the subsequent transfer of the butylamine moiety of spermidine to the epsilon-amino group of a specific lysine residue of the eIF-5A precursor protein to form the intermediate deoxyhypusine residue. In Archaeoglobus fulgidus (strain ATCC 49558 / DSM 4304 / JCM 9628 / NBRC 100126 / VC-16), this protein is Probable deoxyhypusine synthase 1 (dys1).